A 319-amino-acid chain; its full sequence is HTH-type transcriptional regulator YidZ (319 aa).

In terms of domain architecture, HTH lysR-type spans Leu-8–Thr-65. Residues Val-25–Ala-44 constitute a DNA-binding region (H-T-H motif).

It belongs to the LysR transcriptional regulatory family.

Functionally, involved in anaerobic NO protection. The polypeptide is HTH-type transcriptional regulator YidZ (Salmonella typhi).